Here is a 104-residue protein sequence, read N- to C-terminus: Large ribosomal subunit protein uL24 (104 aa).

Belongs to the universal ribosomal protein uL24 family. As to quaternary structure, part of the 50S ribosomal subunit.

In terms of biological role, one of two assembly initiator proteins, it binds directly to the 5'-end of the 23S rRNA, where it nucleates assembly of the 50S subunit. Functionally, one of the proteins that surrounds the polypeptide exit tunnel on the outside of the subunit. The protein is Large ribosomal subunit protein uL24 of Shewanella halifaxensis (strain HAW-EB4).